A 469-amino-acid polypeptide reads, in one-letter code: Cysteine--tRNA ligase (469 aa).

Residue Cys33 coordinates Zn(2+). The 'HIGH' region motif lies at 35–45; that stretch reads ATVQGLPHIGH. Zn(2+)-binding residues include Cys211, His236, and Glu240. The short motif at 267–271 is the 'KMSKS' region element; the sequence is KMSKS. Residue Lys270 participates in ATP binding.

The protein belongs to the class-I aminoacyl-tRNA synthetase family. In terms of assembly, monomer. Requires Zn(2+) as cofactor.

The protein localises to the cytoplasm. The catalysed reaction is tRNA(Cys) + L-cysteine + ATP = L-cysteinyl-tRNA(Cys) + AMP + diphosphate. This Mycobacterium bovis (strain ATCC BAA-935 / AF2122/97) protein is Cysteine--tRNA ligase (cysS).